A 441-amino-acid chain; its full sequence is Velvet complex subunit B (441 aa).

Composition is skewed to polar residues over residues 1-14 (MNPG…QPGH) and 60-75 (MMQQ…STTE). The disordered stretch occupies residues 1-104 (MNPGYSSTAS…QPHVGEQDGR (104 aa)). A Velvet domain is found at 100–426 (EQDGRKYRLD…AGQGIKIPIR (327 aa)).

It belongs to the velvet family. VelB subfamily. Component of the heterotrimeric velvet complex composed of LAEA, VEA and VELB; VEA acting as a bridging protein between LAEA and VELB. Forms a heterodimeric complex with VOSA; the formation of the VELB-VOSA complex is light-dependent.

It is found in the nucleus. The protein resides in the cytoplasm. Component of the velvet transcription factor complex that controls sexual/asexual developmental ratio in response to light, promoting sexual development in the darkness while stimulating asexual sporulation under illumination. The velvet complex acts as a global regulator for secondary metabolite gene expression. Component of the VELB-VOSA heterodimeric complex that plays a dual role in activating genes associated with spore maturation and repressing certain development-associated genes. The VELB-VOSA complex binds DNA through the DNA-binding domain of VOSA that recognizes an 11-nucleotide consensus sequence 5'-CTGGCCGCGGC-3' consisting of two motifs in the promoters of key developmental regulatory genes. Involved in the regulation of the response to eactive oxygen species (ROS) stress. The chain is Velvet complex subunit B from Pyricularia oryzae (strain 70-15 / ATCC MYA-4617 / FGSC 8958) (Rice blast fungus).